Here is a 101-residue protein sequence, read N- to C-terminus: NAD(P)H-quinone oxidoreductase subunit 4L, chloroplastic (101 aa).

A run of 3 helical transmembrane segments spans residues 2–22 (MLEHVLVLSAYLFSIGIYGLI), 32–52 (MCLELILNAVNINLVTFSDLF), and 61–81 (IFSIFVIAIAAAEAAIGPAIV).

The protein belongs to the complex I subunit 4L family. NDH is composed of at least 16 different subunits, 5 of which are encoded in the nucleus.

The protein resides in the plastid. The protein localises to the chloroplast thylakoid membrane. The enzyme catalyses a plastoquinone + NADH + (n+1) H(+)(in) = a plastoquinol + NAD(+) + n H(+)(out). The catalysed reaction is a plastoquinone + NADPH + (n+1) H(+)(in) = a plastoquinol + NADP(+) + n H(+)(out). In terms of biological role, NDH shuttles electrons from NAD(P)H:plastoquinone, via FMN and iron-sulfur (Fe-S) centers, to quinones in the photosynthetic chain and possibly in a chloroplast respiratory chain. The immediate electron acceptor for the enzyme in this species is believed to be plastoquinone. Couples the redox reaction to proton translocation, and thus conserves the redox energy in a proton gradient. The chain is NAD(P)H-quinone oxidoreductase subunit 4L, chloroplastic from Illicium oligandrum (Star anise).